The primary structure comprises 137 residues: Peptide methionine sulfoxide reductase MsrB (137 aa).

Residues 7–129 (AEELKKNLSE…NSASLRFTDG (123 aa)) enclose the MsrB domain. Zn(2+) contacts are provided by Cys46, Cys49, Cys95, and Cys98. Cys118 functions as the Nucleophile in the catalytic mechanism.

It belongs to the MsrB Met sulfoxide reductase family. It depends on Zn(2+) as a cofactor.

It catalyses the reaction L-methionyl-[protein] + [thioredoxin]-disulfide + H2O = L-methionyl-(R)-S-oxide-[protein] + [thioredoxin]-dithiol. In Escherichia coli (strain K12 / MC4100 / BW2952), this protein is Peptide methionine sulfoxide reductase MsrB.